A 363-amino-acid chain; its full sequence is MKKTLAALIVGAFAASAANAAVVYNNEGTNVELGGRLSIIAEQSNSTIKDQKQQHGALRNQSSRFHIKATHNFGDGFYAQGYLETRLVSAQSGTESDNFGHIITKYAYVTLGNKAFGEVKLGRAKTIADGITSAEDKEYGVLNNSKYIPTNGNTVGYTFKGIDGLVLGANYLLAQERNKYGTGVGEVTSQSISNGVQVGAKYDANNIIVGIAYGRTNYREDVSQQDDAGKKQQVNGALSTLGYRFSDLGLLVSLDSGYAKTKNYKDKHEKRYFVSPGFQYELMEDTNLYGNFKYERNSVDQGKKEREHAVLFGVDHKLHKQVLTYIEGAYARTRTTTRDTTKNTSTVKTEKEKSVGVGLRVYF.

A signal peptide spans 1–20 (MKKTLAALIVGAFAASAANA).

It belongs to the Gram-negative porin family. In terms of assembly, homotrimer.

It is found in the cell outer membrane. Its function is as follows. Forms pores that allow passive diffusion of small molecules across the outer membrane. The sequence is that of Outer membrane protein P2 (ompP2) from Haemophilus influenzae.